A 499-amino-acid chain; its full sequence is Probable cytosol aminopeptidase (499 aa).

Residues K267 and D272 each contribute to the Mn(2+) site. K279 is an active-site residue. Residues D290, D349, and E351 each coordinate Mn(2+). R353 is a catalytic residue.

The protein belongs to the peptidase M17 family. It depends on Mn(2+) as a cofactor.

It localises to the cytoplasm. The enzyme catalyses Release of an N-terminal amino acid, Xaa-|-Yaa-, in which Xaa is preferably Leu, but may be other amino acids including Pro although not Arg or Lys, and Yaa may be Pro. Amino acid amides and methyl esters are also readily hydrolyzed, but rates on arylamides are exceedingly low.. It catalyses the reaction Release of an N-terminal amino acid, preferentially leucine, but not glutamic or aspartic acids.. Its function is as follows. Presumably involved in the processing and regular turnover of intracellular proteins. Catalyzes the removal of unsubstituted N-terminal amino acids from various peptides. This Buchnera aphidicola subsp. Acyrthosiphon pisum (strain 5A) protein is Probable cytosol aminopeptidase.